Here is a 367-residue protein sequence, read N- to C-terminus: Apolipoprotein A-V (367 aa).

A signal peptide spans 1-20; sequence MAAVITWALALLSVFATVQA. Phosphoserine is present on serine 52. A coiled-coil region spans residues 231-255; sequence TRKAKDLHTSIQRNLDQLRDELSTF. The interval 305–332 is disordered; that stretch reads EEIQHQLAPPPPSHSAFAPELGHSDSNK.

Belongs to the apolipoprotein A1/A4/E family. As to quaternary structure, interacts with GPIHBP1. Interacts with SORL1; this interaction leads to APOA5 internalization and sorting either to lysosomes and degradation, or to the trans-Golgi network. Phosphorylated by FAM20C in the extracellular medium. As to expression, liver.

The protein resides in the secreted. It localises to the early endosome. It is found in the late endosome. The protein localises to the golgi apparatus. Its subcellular location is the trans-Golgi network. In terms of biological role, minor apolipoprotein mainly associated with HDL and to a lesser extent with VLDL. May also be associated with chylomicrons. Important determinant of plasma triglyceride (TG) levels by both being a potent stimulator of apo-CII lipoprotein lipase (LPL) TG hydrolysis and an inhibitor of the hepatic VLDL-TG production rate (without affecting the VLDL-apoB production rate). Activates poorly lecithin:cholesterol acyltransferase (LCAT) and does not enhance efflux of cholesterol from macrophages. Binds heparin. The protein is Apolipoprotein A-V (Apoa5) of Rattus norvegicus (Rat).